Consider the following 798-residue polypeptide: Palmitoyl thioesterase CPT1C (798 aa).

Residues 1 to 52 lie on the Cytoplasmic side of the membrane; that stretch reads MAEAHQASSLLSSLSSDGAEVELSSPVWQEIYLCALRSWKRHLWRVWNDFLA. The helical transmembrane segment at 53-75 threads the bilayer; it reads GVVPATPLSWLFLFSTIQLACLL. Over 76–103 the chain is Lumenal; it reads QLDPSLGLMEKIKELLPDWGGQHHQLQG. A helical transmembrane segment spans residues 104-126; the sequence is FLSAAVFASCLWGALIFTLHVAL. The Cytoplasmic portion of the chain corresponds to 127-798; that stretch reads RLLLSHHGWL…PNTPTSSTNL (672 aa). The Proton acceptor role is filled by His-469. CoA is bound at residue 551–563; the sequence is GKSFIKCCHVSSD. Positions 585, 587, and 598 each coordinate (R)-carnitine. The required for interaction with GRIA1 stretch occupies residues 759–798; the sequence is LFRVGQHFKRQFRGENSDYRYNFLSCKTVDPNTPTSSTNL.

It belongs to the carnitine/choline acetyltransferase family. Peripherally associated with AMPAR complex. AMPAR complex consists of an inner core made of 4 pore-forming GluA/GRIA proteins (GRIA1, GRIA2, GRIA3 and GRIA4) and 4 major auxiliary subunits arranged in a twofold symmetry. One of the two pairs of distinct binding sites is occupied either by CNIH2, CNIH3 or CACNG2, CACNG3. The other harbors CACNG2, CACNG3, CACNG4, CACNG8 or GSG1L. This inner core of AMPAR complex is complemented by outer core constituents binding directly to the GluA/GRIA proteins at sites distinct from the interaction sites of the inner core constituents. Outer core constituents include at least PRRT1, PRRT2, CKAMP44/SHISA9, FRRS1L and NRN1. The proteins of the inner and outer core serve as a platform for other, more peripherally associated AMPAR constituents, including CPT1C. Alone or in combination, these auxiliary subunits control the gating and pharmacology of the AMPAR complex and profoundly impact their biogenesis and protein processing. Interacts with SACM1L; the interaction regulates SACM1L phosphatidylinositol-3-phosphatase activity and translocation to endoplasmic reticulum/trans Golgi network in a malonyl-CoA dependent manner. Interacts with ATL1. In terms of tissue distribution, predominantly expressed in brain (at protein level) and testis, highly expressed in the hippocampus, amygdala and cerebellum. Expressed in neurons but not astrocytes. Expressed in the ventral horn from spinal cords.

It is found in the synapse. The protein resides in the cell projection. It localises to the axon. The protein localises to the dendrite. Its subcellular location is the dendritic spine. It is found in the endoplasmic reticulum membrane. It catalyses the reaction S-hexadecanoyl-L-cysteinyl-[protein] + H2O = L-cysteinyl-[protein] + hexadecanoate + H(+). In terms of biological role, palmitoyl thioesterase specifically expressed in the endoplasmic reticulum of neurons. Modulates the trafficking of the glutamate receptor, AMPAR, to plasma membrane through depalmitoylation of GRIA1. Also regulates AMPR trafficking through the regulation of SACM1L phosphatidylinositol-3-phosphatase activity by interaction in a malonyl-CoA dependent manner. Binds malonyl-CoA and couples malonyl-CoA to ceramide levels, necessary for proper spine maturation and contributing to systemic energy homeostasis and appetite control. Binds to palmitoyl-CoA, but does not have carnitine palmitoyltransferase 1 catalytic activity or at very low levels. In Mus musculus (Mouse), this protein is Palmitoyl thioesterase CPT1C (Cpt1c).